Consider the following 291-residue polypeptide: Zinc transporter ZupT (291 aa).

The next 8 helical transmembrane spans lie at 8-28 (IFIA…GSII), 39-59 (VLSL…FMEI), 74-94 (HWAE…SLLI), 147-167 (GIFT…ATFI), 174-194 (TLGI…GLAV), 209-229 (FIYS…GALI), 233-253 (FIGD…MVFI), and 271-291 (SLYG…LLGQ). Fe(2+) is bound by residues asparagine 158 and glutamate 161. Residues glutamate 161 and histidine 186 each contribute to the Zn(2+) site. Positions 187, 190, and 219 each coordinate Fe(2+). Glutamate 190 is a Zn(2+) binding site.

The protein belongs to the ZIP transporter (TC 2.A.5) family. ZupT subfamily.

Its subcellular location is the cell inner membrane. The catalysed reaction is Zn(2+)(in) = Zn(2+)(out). Its function is as follows. Mediates zinc uptake. May also transport other divalent cations. The polypeptide is Zinc transporter ZupT (Campylobacter jejuni subsp. jejuni serotype O:2 (strain ATCC 700819 / NCTC 11168)).